The sequence spans 184 residues: Type-1 fimbrial protein, A chain (184 aa).

The first 23 residues, Met-1–Ala-23, serve as a signal peptide directing secretion. The cysteines at positions 46 and 86 are disulfide-linked.

This sequence belongs to the fimbrial protein family.

It is found in the fimbrium. Its function is as follows. Fimbriae (also called pili), polar filaments radiating from the surface of the bacterium to a length of 0.5-1.5 micrometers and numbering 100-300 per cell, enable bacteria to colonize the epithelium of specific host organs. The protein is Type-1 fimbrial protein, A chain of Escherichia coli.